A 285-amino-acid polypeptide reads, in one-letter code: K88 fimbrial protein AB (285 aa).

The signal sequence occupies residues 1–21 (MKKTLIALAIAASAASGMAHA).

The protein belongs to the fimbrial K88 protein family. In terms of assembly, K88 fimbria, 0.1-1 micrometer in length and 7 nanometers in diameter, is composed of about 100 identical subunits.

Its subcellular location is the fimbrium. K88 major fimbrial subunit. Fimbriae (also called pili), are polar filaments radiating from the surface of the bacterium to a length of 0.5-1.5 micrometers and numbering 100-300 per cell. They enable bacteria to colonize the epithelium of specific host organs. This Escherichia coli protein is K88 fimbrial protein AB (faeG).